We begin with the raw amino-acid sequence, 361 residues long: 5-exo-hydroxycamphor dehydrogenase (361 aa).

The Zn(2+) site is built by Cys40, His62, Cys98, Cys101, Cys104, and Cys170.

It belongs to the zinc-containing alcohol dehydrogenase family. The cofactor is Zn(2+).

It carries out the reaction (1R,4R,5R)-5-hydroxycamphor + NAD(+) = (1R,4R)-bornane-2,5-dione + NADH + H(+). Its pathway is terpene metabolism; (R)-camphor degradation. The sequence is that of 5-exo-hydroxycamphor dehydrogenase (camD) from Pseudomonas putida (Arthrobacter siderocapsulatus).